The primary structure comprises 442 residues: 5-methylthioadenosine/S-adenosylhomocysteine deaminase (442 aa).

Residues His70 and His72 each contribute to the Zn(2+) site. Residues Glu99 and His191 each coordinate substrate. His218 contributes to the Zn(2+) binding site. The substrate site is built by Glu221 and Asp306. Asp306 provides a ligand contact to Zn(2+).

Belongs to the metallo-dependent hydrolases superfamily. MTA/SAH deaminase family. Requires Zn(2+) as cofactor.

The enzyme catalyses S-adenosyl-L-homocysteine + H2O + H(+) = S-inosyl-L-homocysteine + NH4(+). The catalysed reaction is S-methyl-5'-thioadenosine + H2O + H(+) = S-methyl-5'-thioinosine + NH4(+). Catalyzes the deamination of 5-methylthioadenosine and S-adenosyl-L-homocysteine into 5-methylthioinosine and S-inosyl-L-homocysteine, respectively. Is also able to deaminate adenosine. The polypeptide is 5-methylthioadenosine/S-adenosylhomocysteine deaminase (Nitratidesulfovibrio vulgaris (strain ATCC 29579 / DSM 644 / CCUG 34227 / NCIMB 8303 / VKM B-1760 / Hildenborough) (Desulfovibrio vulgaris)).